A 139-amino-acid polypeptide reads, in one-letter code: MILGIGSDLIDIRRVAKVIERHGDRFLDRVFTPAERAKAQRRAANEKMVVATYAKRFAAKEACAKALGTGIRHGVWWRDMGVVNLPGGRPTMQLTGGAKARLESMTPPGHEARIDLSITDDWPLAQAFVIISADPPGRP.

Mg(2+) contacts are provided by aspartate 8 and glutamate 61.

It belongs to the P-Pant transferase superfamily. AcpS family. The cofactor is Mg(2+).

It is found in the cytoplasm. It carries out the reaction apo-[ACP] + CoA = holo-[ACP] + adenosine 3',5'-bisphosphate + H(+). Transfers the 4'-phosphopantetheine moiety from coenzyme A to a Ser of acyl-carrier-protein. The chain is Holo-[acyl-carrier-protein] synthase from Rhodopseudomonas palustris (strain BisA53).